Consider the following 154-residue polypeptide: MPVLQIRKIGDPVLRSKAKPVTEITKKTLSLIDNMVETMYQAEGVGLAAPQVGVSKRIIVVDTGEGQGLIELINPEIIETEGKDIMEEGCLSVPGQTGKVIRASKVTVKGLNRGGKEVRIRAEGFLARAFQHEIDHLNGILFIDKVVRIGEEMI.

The Fe cation site is built by Cys90 and His132. Glu133 is an active-site residue. Fe cation is bound at residue His136.

Belongs to the polypeptide deformylase family. Fe(2+) serves as cofactor.

It carries out the reaction N-terminal N-formyl-L-methionyl-[peptide] + H2O = N-terminal L-methionyl-[peptide] + formate. Functionally, removes the formyl group from the N-terminal Met of newly synthesized proteins. Requires at least a dipeptide for an efficient rate of reaction. N-terminal L-methionine is a prerequisite for activity but the enzyme has broad specificity at other positions. The protein is Peptide deformylase of Halothermothrix orenii (strain H 168 / OCM 544 / DSM 9562).